A 319-amino-acid chain; its full sequence is MAGPLGKDLLGLAPLSAEQIRLVLDTAIPFREISERAIKKVPTLRGATIVNLFFEASTRTRISFEFAEKRLSADTVNVAVAGSSVSKGETLVDTARNLEAMKIDMVVIRHPASGAARFLAERIESNVINAGDGTNEHPTQGLLDMLTLRDRLGDLAGKRICIVGDVLHSRVARSNIWGLKKLGAEVAVCGPRSLLPNAIGEMGVTVFDRVEAAIEWADALNILRLQLERMQAGYIPSLREYNRVFGVTSARLEHASRDLLILHPGPMNRGVEIDSDVADGPHSVILDQVTNGVAVRMAVLYLLAGGKPELADAAQKGVA.

Residues Arg-59 and Thr-60 each contribute to the carbamoyl phosphate site. Lys-87 serves as a coordination point for L-aspartate. The carbamoyl phosphate site is built by Arg-109, His-137, and Gln-140. Residues Arg-170 and Arg-224 each coordinate L-aspartate. Carbamoyl phosphate contacts are provided by Gly-265 and Pro-266.

This sequence belongs to the aspartate/ornithine carbamoyltransferase superfamily. ATCase family. As to quaternary structure, heterododecamer (2C3:3R2) of six catalytic PyrB chains organized as two trimers (C3), and six regulatory PyrI chains organized as three dimers (R2).

It carries out the reaction carbamoyl phosphate + L-aspartate = N-carbamoyl-L-aspartate + phosphate + H(+). Its pathway is pyrimidine metabolism; UMP biosynthesis via de novo pathway; (S)-dihydroorotate from bicarbonate: step 2/3. Functionally, catalyzes the condensation of carbamoyl phosphate and aspartate to form carbamoyl aspartate and inorganic phosphate, the committed step in the de novo pyrimidine nucleotide biosynthesis pathway. This Gemmatimonas aurantiaca (strain DSM 14586 / JCM 11422 / NBRC 100505 / T-27) protein is Aspartate carbamoyltransferase catalytic subunit.